Reading from the N-terminus, the 474-residue chain is 3-isopropylmalate dehydratase large subunit (474 aa).

3 residues coordinate [4Fe-4S] cluster: C355, C415, and C418.

It belongs to the aconitase/IPM isomerase family. LeuC type 1 subfamily. As to quaternary structure, heterodimer of LeuC and LeuD. [4Fe-4S] cluster is required as a cofactor.

It carries out the reaction (2R,3S)-3-isopropylmalate = (2S)-2-isopropylmalate. Its pathway is amino-acid biosynthesis; L-leucine biosynthesis; L-leucine from 3-methyl-2-oxobutanoate: step 2/4. Its function is as follows. Catalyzes the isomerization between 2-isopropylmalate and 3-isopropylmalate, via the formation of 2-isopropylmaleate. This is 3-isopropylmalate dehydratase large subunit from Shewanella sp. (strain MR-7).